The following is a 59-amino-acid chain: Small, acid-soluble spore protein H (59 aa).

It belongs to the SspH family.

It is found in the spore core. This is Small, acid-soluble spore protein H from Bacillus thuringiensis subsp. konkukian (strain 97-27).